The primary structure comprises 53 residues: Antilisterial bacteriocin subtilosin biosynthesis protein AlbB (53 aa).

A run of 2 helical transmembrane segments spans residues 8–28 and 30–50; these read ILLY…FVKS and YLFT…ARKA.

The protein localises to the cell membrane. In terms of biological role, involved in the production of the bacteriocin subtilosin. Required for maximal production and for optimal immunity to subtilosin. In Bacillus subtilis (strain 168), this protein is Antilisterial bacteriocin subtilosin biosynthesis protein AlbB (albB).